Reading from the N-terminus, the 396-residue chain is Protein Njmu-R1 (396 aa).

The segment at 1 to 78 (MLPSLQESMD…SGDDFSLSLA (78 aa)) is disordered. Ser-8 and Ser-18 each carry phosphoserine. Residues 9–24 (MDGDEKELESSEEGGS) show a composition bias toward acidic residues. The segment covering 58–67 (GSPSGTNAET) has biased composition (polar residues).

As to quaternary structure, component of the complex WDR11 composed of C17orf75, FAM91A1 and WDR11; FAM91A1 and WDR11 are required for proper location of the complex. Interacts with TBC1D23; this interaction may be indirect and recruits TBC1D23 to AP-1-derived vesicles. In terms of tissue distribution, highly expressed in testis and also expressed in fetal testis.

The protein localises to the golgi apparatus. The protein resides in the trans-Golgi network. Its subcellular location is the cytoplasmic vesicle. In terms of biological role, as component of the WDR11 complex acts together with TBC1D23 to facilitate the golgin-mediated capture of vesicles generated using AP-1. May have a role in spermatogenesis. This Homo sapiens (Human) protein is Protein Njmu-R1 (C17orf75).